The chain runs to 553 residues: Dihydroxy-acid dehydratase (553 aa).

Asp-78 serves as a coordination point for Mg(2+). Cys-119 contributes to the [2Fe-2S] cluster binding site. Mg(2+)-binding residues include Asp-120 and Lys-121. The residue at position 121 (Lys-121) is an N6-carboxylysine. Cys-193 is a [2Fe-2S] cluster binding site. Glu-441 is a binding site for Mg(2+). Ser-467 serves as the catalytic Proton acceptor.

The protein belongs to the IlvD/Edd family. Homodimer. It depends on [2Fe-2S] cluster as a cofactor. Requires Mg(2+) as cofactor.

The enzyme catalyses (2R)-2,3-dihydroxy-3-methylbutanoate = 3-methyl-2-oxobutanoate + H2O. It carries out the reaction (2R,3R)-2,3-dihydroxy-3-methylpentanoate = (S)-3-methyl-2-oxopentanoate + H2O. Its pathway is amino-acid biosynthesis; L-isoleucine biosynthesis; L-isoleucine from 2-oxobutanoate: step 3/4. It participates in amino-acid biosynthesis; L-valine biosynthesis; L-valine from pyruvate: step 3/4. Functions in the biosynthesis of branched-chain amino acids. Catalyzes the dehydration of (2R,3R)-2,3-dihydroxy-3-methylpentanoate (2,3-dihydroxy-3-methylvalerate) into 2-oxo-3-methylpentanoate (2-oxo-3-methylvalerate) and of (2R)-2,3-dihydroxy-3-methylbutanoate (2,3-dihydroxyisovalerate) into 2-oxo-3-methylbutanoate (2-oxoisovalerate), the penultimate precursor to L-isoleucine and L-valine, respectively. This is Dihydroxy-acid dehydratase from Trichlorobacter lovleyi (strain ATCC BAA-1151 / DSM 17278 / SZ) (Geobacter lovleyi).